The primary structure comprises 112 residues: Integration host factor subunit alpha (112 aa).

It belongs to the bacterial histone-like protein family. Heterodimer of an alpha and a beta chain.

In terms of biological role, this protein is one of the two subunits of integration host factor, a specific DNA-binding protein that functions in genetic recombination as well as in transcriptional and translational control. This chain is Integration host factor subunit alpha, found in Rhizobium etli (strain CIAT 652).